Consider the following 486-residue polypeptide: Beta-barrel assembly-enhancing protease (486 aa).

The first 19 residues, 1 to 19 (MIATLLSSLLLTGPISAGA), serve as a signal peptide directing secretion. His134 contributes to the Zn(2+) binding site. The active site involves Glu135. Zn(2+) is bound by residues His138 and Glu199. The active-site Proton donor is the Asp203.

The protein belongs to the peptidase M48 family. BepA subfamily. Requires Zn(2+) as cofactor.

It is found in the periplasm. Functions both as a chaperone and a metalloprotease. Maintains the integrity of the outer membrane by promoting either the assembly or the elimination of outer membrane proteins, depending on their folding state. The chain is Beta-barrel assembly-enhancing protease from Yersinia pestis.